Here is a 354-residue protein sequence, read N- to C-terminus: Uroporphyrinogen decarboxylase (354 aa).

Residues 27 to 31 (RQAGR), Asp-77, Tyr-154, Thr-209, and His-327 each bind substrate.

Belongs to the uroporphyrinogen decarboxylase family. As to quaternary structure, homodimer.

It localises to the cytoplasm. It carries out the reaction uroporphyrinogen III + 4 H(+) = coproporphyrinogen III + 4 CO2. The protein operates within porphyrin-containing compound metabolism; protoporphyrin-IX biosynthesis; coproporphyrinogen-III from 5-aminolevulinate: step 4/4. In terms of biological role, catalyzes the decarboxylation of four acetate groups of uroporphyrinogen-III to yield coproporphyrinogen-III. The polypeptide is Uroporphyrinogen decarboxylase (Cronobacter sakazakii (strain ATCC BAA-894) (Enterobacter sakazakii)).